The sequence spans 121 residues: Large ribosomal subunit protein bL19 (121 aa).

Belongs to the bacterial ribosomal protein bL19 family.

Functionally, this protein is located at the 30S-50S ribosomal subunit interface and may play a role in the structure and function of the aminoacyl-tRNA binding site. In Porphyromonas gingivalis (strain ATCC BAA-308 / W83), this protein is Large ribosomal subunit protein bL19.